The following is a 219-amino-acid chain: Ribose-5-phosphate isomerase A (219 aa).

Substrate is bound by residues 28 to 31, 81 to 84, and 94 to 97; these read TGST, DGAD, and KGGG. Residue Glu-103 is the Proton acceptor of the active site. Lys-121 contacts substrate.

The protein belongs to the ribose 5-phosphate isomerase family. As to quaternary structure, homodimer.

It catalyses the reaction aldehydo-D-ribose 5-phosphate = D-ribulose 5-phosphate. It functions in the pathway carbohydrate degradation; pentose phosphate pathway; D-ribose 5-phosphate from D-ribulose 5-phosphate (non-oxidative stage): step 1/1. Functionally, catalyzes the reversible conversion of ribose-5-phosphate to ribulose 5-phosphate. The chain is Ribose-5-phosphate isomerase A from Pectobacterium atrosepticum (strain SCRI 1043 / ATCC BAA-672) (Erwinia carotovora subsp. atroseptica).